Here is a 426-residue protein sequence, read N- to C-terminus: Histidine--tRNA ligase (426 aa).

Belongs to the class-II aminoacyl-tRNA synthetase family. As to quaternary structure, homodimer.

Its subcellular location is the cytoplasm. The catalysed reaction is tRNA(His) + L-histidine + ATP = L-histidyl-tRNA(His) + AMP + diphosphate + H(+). The protein is Histidine--tRNA ligase of Streptococcus sanguinis (strain SK36).